A 307-amino-acid chain; its full sequence is N-myc-interactor (307 aa).

Positions 1–24 (MEADKDDTQQILKEHSPDEFIKDE) are disordered. The residue at position 16 (Ser-16) is a Phosphoserine. Lys-22 is covalently cross-linked (Glycyl lysine isopeptide (Lys-Gly) (interchain with G-Cter in ubiquitin)). A coiled-coil region spans residues 30-64 (IDEITKKNIQLKKEIQKLETELQEATKEFQIKEDI). NID domains are found at residues 103-192 (GQAL…GEVD) and 201-292 (GSAV…EVDV).

This sequence belongs to the NMI family. Interacts with MYCN and MYC, as well as with other transcription factors with a Zip, HLH or a HLH-Zip motif. Interacts with all STAT proteins except STAT2. Interacts with IRF7, the interaction is direct and leads to the inhibition of IRF7-mediated type I IFN production. Interacts (via coiled-coil domain) with TRIM21 (via the SPRY domain); the interaction leads to 'Lys-63'-linked ubiquitination of NMI. Interacts with IFI35; the interaction is direct and is facilitated by TRIM21. Interacts with TLR4; the interaction is direct and leads to NF-kappa-B activation. In terms of assembly, (Microbial infection) Interacts with human cytomegalovirus protein UL23; this interaction inhibits NMI-mediated transcription of interferon-gamma stimulated genes. Ubiquitinated. 'Lys-63'-linked ubiquitination by TRIM21 promotes interaction with IFI35 and inhibits virus-triggered type I IFN-beta production. Expressed in adult spleen, liver, and kidney. Expressed in fetal thymus, liver, placenta, spleen, lung, and kidney but not brain. Expressed in macrophages.

It is found in the cytoplasm. The protein resides in the nucleus. The protein localises to the secreted. Functionally, acts as a signaling pathway regulator involved in innate immune system response. In response to interleukin 2/IL2 and interferon IFN-gamma/IFNG, interacts with signal transducer and activator of transcription/STAT which activate the transcription of downstream genes involved in a multitude of signals for development and homeostasis. Enhances the recruitment of CBP/p300 coactivators to STAT1 and STAT5, resulting in increased STAT1- and STAT5-dependent transcription. In response to interferon IFN-alpha, associates in a complex with signaling pathway regulator IFI35 to regulate immune response; the complex formation prevents proteasome-mediated degradation of IFI35. In complex with IFI35, inhibits virus-triggered type I IFN-beta production when ubiquitinated by ubiquitin-protein ligase TRIM21. In complex with IFI35, negatively regulates nuclear factor NF-kappa-B signaling by inhibiting the nuclear translocation, activation and transcription of NF-kappa-B subunit p65/RELA, resulting in the inhibition of endothelial cell proliferation, migration and re-endothelialization of injured arteries. Negatively regulates virus-triggered type I interferon/IFN production by inducing proteosome-dependent degradation of IRF7, a transcriptional regulator of type I IFN, thereby interfering with cellular antiviral responses. Beside its role as an intracellular signaling pathway regulator, also functions extracellularly as damage-associated molecular patterns (DAMPs) to promote inflammation, when actively released by macrophage to the extracellular space during cell injury or pathogen invasion. Macrophage-secreted NMI activates NF-kappa-B signaling in adjacent macrophages through Toll-like receptor 4/TLR4 binding and activation, thereby inducing NF-kappa-B translocation from the cytoplasm into the nucleus which promotes the release of pro-inflammatory cytokines. The protein is N-myc-interactor of Homo sapiens (Human).